The primary structure comprises 788 residues: LPS-assembly protein LptD (788 aa).

The signal sequence occupies residues 1 to 24; it reads MKKRFPTLLATLIWTALYSQHTLA.

This sequence belongs to the LptD family. In terms of assembly, component of the lipopolysaccharide transport and assembly complex. Interacts with LptE and LptA.

The protein localises to the cell outer membrane. Its function is as follows. Together with LptE, is involved in the assembly of lipopolysaccharide (LPS) at the surface of the outer membrane. The protein is LPS-assembly protein LptD of Yersinia enterocolitica serotype O:8 / biotype 1B (strain NCTC 13174 / 8081).